The chain runs to 486 residues: Cobyric acid synthase (486 aa).

The GATase cobBQ-type domain occupies 248–435 (VLNVVVPVLP…LHGLFESPAA (188 aa)). Cys-329 functions as the Nucleophile in the catalytic mechanism. His-427 is an active-site residue.

This sequence belongs to the CobB/CobQ family. CobQ subfamily.

Its pathway is cofactor biosynthesis; adenosylcobalamin biosynthesis. Catalyzes amidations at positions B, D, E, and G on adenosylcobyrinic A,C-diamide. NH(2) groups are provided by glutamine, and one molecule of ATP is hydrogenolyzed for each amidation. This chain is Cobyric acid synthase, found in Pseudomonas syringae pv. syringae (strain B728a).